Reading from the N-terminus, the 394-residue chain is Acetyl-CoA acetyltransferase (394 aa).

Cysteine 89 functions as the Acyl-thioester intermediate in the catalytic mechanism. Residues histidine 350 and cysteine 380 each act as proton acceptor in the active site.

Belongs to the thiolase-like superfamily. Thiolase family. As to quaternary structure, homotetramer.

The protein localises to the cytoplasm. The enzyme catalyses 2 acetyl-CoA = acetoacetyl-CoA + CoA. It participates in biopolymer metabolism; poly-(R)-3-hydroxybutanoate biosynthesis. The protein operates within metabolic intermediate biosynthesis; (R)-mevalonate biosynthesis; (R)-mevalonate from acetyl-CoA: step 1/3. In Allochromatium vinosum (strain ATCC 17899 / DSM 180 / NBRC 103801 / NCIMB 10441 / D) (Chromatium vinosum), this protein is Acetyl-CoA acetyltransferase.